Here is a 518-residue protein sequence, read N- to C-terminus: MFIRAPNFGRKLLLTCIVAGVMIAILVSCLQFLVAWHKHEVKYDTLITDVQKYLDTYFADLKSTTDRLQPLTLDTCQQANPELTARAAFSMNVRTFVLVKDKKTFCSSATGEMDIPLNELIPALDINKNVDMAILPGTPMVPNKPAIVIWYRNPLLKNSGVFAALNLNLTPSLFYSSRQEDYDGVALIIGNTALSTFSSRLMNVNELTDMPVRETKIAGIPLTVRLYADDWTWNDVWYAFLLGGMSGTVVGLLCYYLMSVRMRPGREIMTAIKREQFYVAYQPVVDTQALRVTGLEVLLRWRHPVAGEIPPDAFINFAESQKMIVPLTQHLFELIARDAAELEKVLPVGVKFGINIAPDHLHSESFKADIQKLLTSLPAHHFQIVLEITERDMLKEQEATQLFAWLHSVGVEIAIDDFGTGHSALIYLERFTLDYLKIDRGFINAIGTETITSPVLDAVLTLAKRLNMLTVAEGVETPEQARWLSERGVNFMQGYWISRPLPLDDFVRWLKKPYTPQW.

2 consecutive transmembrane segments (helical) span residues 16–36 (CIVA…LVAW) and 236–256 (VWYA…LCYY). An EAL domain is found at 261–514 (RMRPGREIMT…DFVRWLKKPY (254 aa)).

Its subcellular location is the cell inner membrane. It carries out the reaction 3',3'-c-di-GMP + H2O = 5'-phosphoguanylyl(3'-&gt;5')guanosine + H(+). In terms of biological role, phosphodiesterase (PDE) that catalyzes the hydrolysis of cyclic-di-GMP (c-di-GMP) to 5'-pGpG. This Escherichia coli (strain K12) protein is Probable cyclic di-GMP phosphodiesterase PdeN.